Here is a 133-residue protein sequence, read N- to C-terminus: FK506-binding protein 2 (133 aa).

The N-terminal stretch at 1 to 20 (MKLLYCLLLVILALVGLSSG) is a signal peptide. Positions 45–133 (GDKLKIHYTG…IFDVELIGIN (89 aa)) constitute a PPIase FKBP-type domain.

The protein belongs to the FKBP-type PPIase family.

It carries out the reaction [protein]-peptidylproline (omega=180) = [protein]-peptidylproline (omega=0). Its activity is regulated as follows. Inhibited by both FK506 and rapamycin. In terms of biological role, PPIases accelerate the folding of proteins by catalyzing the cis-trans isomerization of proline imidic peptide bonds in oligopeptides. The protein is FK506-binding protein 2 (fkbp2) of Dictyostelium discoideum (Social amoeba).